A 109-amino-acid chain; its full sequence is Nucleoid-associated protein VIBHAR_03086 (109 aa).

Disordered regions lie at residues 1 to 21 (MFGK…QDRM) and 88 to 109 (QKEK…KMPF).

The protein belongs to the YbaB/EbfC family. Homodimer.

It localises to the cytoplasm. The protein localises to the nucleoid. In terms of biological role, binds to DNA and alters its conformation. May be involved in regulation of gene expression, nucleoid organization and DNA protection. This Vibrio campbellii (strain ATCC BAA-1116) protein is Nucleoid-associated protein VIBHAR_03086.